The sequence spans 251 residues: Orotidine 5'-phosphate decarboxylase (251 aa).

Substrate-binding positions include aspartate 19, lysine 42, 69–78 (DLKFHDIPNT), threonine 133, arginine 194, glutamine 204, glycine 224, and arginine 225. Residue lysine 71 is the Proton donor of the active site.

The protein belongs to the OMP decarboxylase family. Type 1 subfamily. In terms of assembly, homodimer.

The catalysed reaction is orotidine 5'-phosphate + H(+) = UMP + CO2. The protein operates within pyrimidine metabolism; UMP biosynthesis via de novo pathway; UMP from orotate: step 2/2. In terms of biological role, catalyzes the decarboxylation of orotidine 5'-monophosphate (OMP) to uridine 5'-monophosphate (UMP). In Syntrophus aciditrophicus (strain SB), this protein is Orotidine 5'-phosphate decarboxylase.